Reading from the N-terminus, the 577-residue chain is Zinc finger protein 384 (577 aa).

The segment at 171–225 (TLTEEGGGGGGGGGSVAPKPPRGRKKKRMLESGLPEMNDPYVLSPEDDDDHQKDG) is disordered. The span at 175 to 185 (EGGGGGGGGGS) shows a compositional bias: gly residues. Ser214 bears the Phosphoserine mark. 8 consecutive C2H2-type zinc fingers follow at residues 228 to 250 (YRCR…SKSH), 256 to 278 (HKCP…IRIH), 284 to 306 (YSCN…TRIH), 317 to 339 (HKCP…LRIH), 345 to 367 (YNCS…TRIH), 373 to 397 (YKCA…RRQH), 403 to 425 (FKCH…LSTH), and 433 to 455 (YTCT…MRKH). Over residues 501 to 515 (QQQQQQQQQQQQQQQ) the composition is skewed to low complexity. Residues 501-550 (QQQQQQQQQQQQQQQQPPPHFQSPGAAPQGGGGGDSNPNPPPQCSFDLTP) form a disordered region.

Belongs to the krueppel C2H2-type zinc-finger protein family. As to quaternary structure, interacts with BCAR1.

The protein localises to the nucleus. Functionally, transcription factor that binds the consensus DNA sequence [GC]AAAAA. Seems to bind and regulate the promoters of MMP1, MMP3, MMP7 and COL1A1. This chain is Zinc finger protein 384 (ZNF384), found in Homo sapiens (Human).